Consider the following 155-residue polypeptide: MAPK regulated corepressor interacting protein 2 (155 aa).

N-acetylmethionine is present on Met1. The disordered stretch occupies residues 1-59; that stretch reads MYTITKGPSKLVAQRRTGPTQQQVESRLGELLKCRHSAPTPQHPRAQPPGPWPLSSPGP. Position 35 is an omega-N-methylarginine (Arg35). Pro residues predominate over residues 46–56; sequence AQPPGPWPLSS. Ser56 carries the phosphoserine modification. Omega-N-methylarginine is present on Arg60. A Phosphoserine modification is found at Ser77.

Belongs to the MCRIP family. In terms of assembly, interacts with DDX6. Interacts with MCRIP1.

Its subcellular location is the cytoplasm. It localises to the stress granule. It is found in the nucleus. This is MAPK regulated corepressor interacting protein 2 (MCRIP2) from Bos taurus (Bovine).